Reading from the N-terminus, the 1295-residue chain is DNA (cytosine-5)-methyltransferase CMT2 (1295 aa).

3 disordered regions span residues 1–23 (MLSP…SSSR), 61–91 (RRST…GKSQ), and 249–287 (NSSK…GKGM). The span at 61–72 (RRSTTLNCNSPE) shows a compositional bias: polar residues. One can recognise a BAH domain in the interval 578–693 (HTFSLGDFAY…VEYSTFQTLR (116 aa)). The region spanning 727–1268 (LPVLDLYSGC…YSLGMAFRGL (542 aa)) is the SAM-dependent MTase C5-type domain. The tract at residues 814 to 835 (SVNSTKETSGSSSSSDDDSDSE) is disordered. The 66-residue stretch at 837–902 (YEVEKLVDIC…SGFKSKILPL (66 aa)) folds into the Chromo domain. Residue cysteine 915 is part of the active site.

The protein belongs to the class I-like SAM-binding methyltransferase superfamily. C5-methyltransferase family.

It is found in the nucleus. The enzyme catalyses a 2'-deoxycytidine in DNA + S-adenosyl-L-methionine = a 5-methyl-2'-deoxycytidine in DNA + S-adenosyl-L-homocysteine + H(+). Functionally, may be involved in the CpXpG methylation and in gene silencing. This chain is DNA (cytosine-5)-methyltransferase CMT2 (CMT2), found in Arabidopsis thaliana (Mouse-ear cress).